We begin with the raw amino-acid sequence, 589 residues long: Transcription factor 4 (589 aa).

6 disordered regions span residues 1-124 (MTSR…SSSK), 138-163 (DGHH…MLGN), 184-239 (PSHS…SQTG), 254-297 (HTNN…EGPL), 384-492 (SLLP…MANN), and 556-589 (KRRE…MGQM). Phosphoserine is present on residues S8 and S13. The segment covering 56 to 74 (GTLSPTKPGSQYYPYSSNN) has biased composition (polar residues). Positions 136 to 157 (MQDGHHSSDPWSSSSGMNQPGY) are leucine-zipper. Over residues 184-224 (PSHSSADINSSLPPMSTFHRSGTNHYSTSSCTPPANGTDSI) the composition is skewed to polar residues. A compositionally biased stretch (low complexity) spans 255 to 266 (TNNSFSSNPSTP). The segment covering 283–292 (NGGQASSSPN) has biased composition (polar residues). S290 is modified (phosphoserine). A class A specific domain region spans residues 380–403 (RGSHSLLPNQVPVPQLPVQSATSP). Composition is skewed to low complexity over residues 385-398 (LLPN…LPVQ) and 421-430 (GQSVSSGSSE). Phosphoserine is present on S433. Basic and acidic residues-rich tracts occupy residues 445 to 461 (KSSE…DIKS) and 477 to 492 (PEQK…MANN). In terms of domain architecture, bHLH spans 486-539 (ERRMANNARERLRVRDINEAFKELGRMVQLHLKSDKPQTKLLILHQAVAVILSL).

In terms of assembly, efficient DNA binding requires dimerization with another bHLH protein. Forms homo- or heterooligomers with myogenin. Interacts with HIVEP2. Interacts with NEUROD2. Interacts with AGBL1.

It localises to the nucleus. Its function is as follows. Transcription factor that binds to the immunoglobulin enhancer Mu-E5/KE5-motif. Involved in the initiation of neuronal differentiation. Activates transcription by binding to the E box (5'-CANNTG-3'). Binds to the E-box present in the somatostatin receptor 2 initiator element (SSTR2-INR) to activate transcription. Interacts with the CCAAT displacement protein (CDP2) to bind the tyrosine hydroxylase enhancer. The protein is Transcription factor 4 (Tcf4) of Rattus norvegicus (Rat).